The primary structure comprises 494 residues: Probable cytosol aminopeptidase (494 aa).

Residues Lys260 and Asp265 each contribute to the Mn(2+) site. Residue Lys272 is part of the active site. The Mn(2+) site is built by Asp283, Asp342, and Glu344. Residue Arg346 is part of the active site.

Belongs to the peptidase M17 family. Requires Mn(2+) as cofactor.

Its subcellular location is the cytoplasm. It carries out the reaction Release of an N-terminal amino acid, Xaa-|-Yaa-, in which Xaa is preferably Leu, but may be other amino acids including Pro although not Arg or Lys, and Yaa may be Pro. Amino acid amides and methyl esters are also readily hydrolyzed, but rates on arylamides are exceedingly low.. It catalyses the reaction Release of an N-terminal amino acid, preferentially leucine, but not glutamic or aspartic acids.. In terms of biological role, presumably involved in the processing and regular turnover of intracellular proteins. Catalyzes the removal of unsubstituted N-terminal amino acids from various peptides. This is Probable cytosol aminopeptidase from Bacillus cereus (strain ZK / E33L).